We begin with the raw amino-acid sequence, 302 residues long: 4-hydroxy-tetrahydrodipicolinate synthase (302 aa).

Thr-50 contacts pyruvate. Tyr-138 (proton donor/acceptor) is an active-site residue. Lys-167 functions as the Schiff-base intermediate with substrate in the catalytic mechanism. Val-209 is a binding site for pyruvate.

This sequence belongs to the DapA family. In terms of assembly, homotetramer; dimer of dimers.

The protein localises to the cytoplasm. The enzyme catalyses L-aspartate 4-semialdehyde + pyruvate = (2S,4S)-4-hydroxy-2,3,4,5-tetrahydrodipicolinate + H2O + H(+). Its pathway is amino-acid biosynthesis; L-lysine biosynthesis via DAP pathway; (S)-tetrahydrodipicolinate from L-aspartate: step 3/4. Its function is as follows. Catalyzes the condensation of (S)-aspartate-beta-semialdehyde [(S)-ASA] and pyruvate to 4-hydroxy-tetrahydrodipicolinate (HTPA). The polypeptide is 4-hydroxy-tetrahydrodipicolinate synthase (Salinibacter ruber (strain DSM 13855 / M31)).